Here is a 298-residue protein sequence, read N- to C-terminus: ADP/ATP translocase 2 (298 aa).

Met-1 is subject to N-acetylmethionine. The Mitochondrial intermembrane segment spans residues 1 to 7; it reads MTDAAVS. N-acetylthreonine; in ADP/ATP translocase 2, N-terminally processed is present on Thr-2. One copy of the Solcar 1 repeat lies at 6-98; that stretch reads VSFAKDFLAG…FAFKDKYKQI (93 aa). The residue at position 7 (Ser-7) is a Phosphoserine. Residues 8–37 form a helical membrane-spanning segment; sequence FAKDFLAGGVAAAISKTAVAPIERVKLLLQ. N6-malonyllysine is present on Lys-23. Over 38 to 74 the chain is Mitochondrial matrix; that stretch reads VQHASKQITADKQYKGIIDCVVRIPKEQGVLSFWRGN. At Lys-43 the chain carries N6-succinyllysine. N6,N6,N6-trimethyllysine; alternate is present on Lys-52. Lys-52 is subject to N6,N6-dimethyllysine; alternate. The residue at position 52 (Lys-52) is an N6-methyllysine; alternate. A helical transmembrane segment spans residues 75 to 99; sequence LANVIRYFPTQALNFAFKDKYKQIF. ADP-binding residues include Arg-80 and Lys-92. 2 positions are modified to N6-malonyllysine: Lys-92 and Lys-96. Residues 100 to 109 are Mitochondrial intermembrane-facing; that stretch reads LGGVDKRTQF. Position 105 is an N6-acetyllysine; alternate (Lys-105). Lys-105 carries the N6-succinyllysine; alternate modification. The chain crosses the membrane as a helical span at residues 110-130; it reads WRYFAGNLASGGAAGATSLCF. 2 Solcar repeats span residues 111 to 201 and 212 to 297; these read RYFA…AKGM and ISWM…IKKF. Topologically, residues 131–178 are mitochondrial matrix; it reads VYPLDFARTRLAADVGKAGAEREFRGLGDCLVKIYKSDGIRGLYQGFN. At Lys-147 the chain carries N6-methyllysine; alternate. Lys-147 is subject to N6-acetyllysine; alternate. The residue at position 147 (Lys-147) is an N6-succinyllysine; alternate. Lys-147 is subject to N6-malonyllysine; alternate. N6-acetyllysine occurs at positions 163 and 166. A helical transmembrane segment spans residues 179–199; sequence VSVQGIIIYRAAYFGIYDTAK. The Mitochondrial intermembrane portion of the chain corresponds to 200-210; the sequence is GMLPDPKNTHI. The helical transmembrane segment at 211 to 231 threads the bilayer; the sequence is FISWMIAQSVTAVAGLTSYPF. Over 232 to 273 the chain is Mitochondrial matrix; sequence DTVRRRMMMQSGRKGTDIMYTGTLDCWRKIARDEGAKAFFKG. An ADP-binding site is contributed by Arg-235. The segment at 235-240 is important for transport activity; sequence RRRMMM. The short motif at 235–240 is the Nucleotide carrier signature motif element; sequence RRRMMM. Position 268 is an N6-acetyllysine; alternate (Lys-268). At Lys-268 the chain carries N6-succinyllysine; alternate. A helical transmembrane segment spans residues 274–291; sequence AWSNVLRGMGGAFVLVLY. Residues 292-298 lie on the Mitochondrial intermembrane side of the membrane; sequence DEIKKFT.

It belongs to the mitochondrial carrier (TC 2.A.29) family. In terms of assembly, monomer. Component of the MMXD complex, which includes CIAO1, ERCC2, CIAO2B, MMS19 and SLC25A5/ANT2. Interacts with AK4. Interacts with TIMM44; leading to inhibit the presequence translocase TIMM23, thereby promoting stabilization of PINK1. In terms of processing, trimethylated by ANTKMT at Lys-52.

The protein localises to the mitochondrion inner membrane. The protein resides in the membrane. The enzyme catalyses ADP(in) + ATP(out) = ADP(out) + ATP(in). It catalyses the reaction H(+)(in) = H(+)(out). With respect to regulation, the matrix-open state (m-state) is inhibited by the membrane-permeable bongkrekic acid (BKA). The cytoplasmic-open state (c-state) is inhibited by the membrane-impermeable toxic inhibitor carboxyatractyloside (CATR). Proton transporter activity is inhibited by ADP:ATP antiporter activity. ADP:ATP antiporter that mediates import of ADP into the mitochondrial matrix for ATP synthesis, and export of ATP out to fuel the cell. Cycles between the cytoplasmic-open state (c-state) and the matrix-open state (m-state): operates by the alternating access mechanism with a single substrate-binding site intermittently exposed to either the cytosolic (c-state) or matrix (m-state) side of the inner mitochondrial membrane. In addition to its ADP:ATP antiporter activity, also involved in mitochondrial uncoupling and mitochondrial permeability transition pore (mPTP) activity. Plays a role in mitochondrial uncoupling by acting as a proton transporter: proton transport uncouples the proton flows via the electron transport chain and ATP synthase to reduce the efficiency of ATP production and cause mitochondrial thermogenesis. Proton transporter activity is inhibited by ADP:ATP antiporter activity, suggesting that SLC25A5/ANT2 acts as a master regulator of mitochondrial energy output by maintaining a delicate balance between ATP production (ADP:ATP antiporter activity) and thermogenesis (proton transporter activity). Proton transporter activity requires free fatty acids as cofactor, but does not transport it. Probably mediates mitochondrial uncoupling in tissues that do not express UCP1. Also plays a key role in mPTP opening, a non-specific pore that enables free passage of the mitochondrial membranes to solutes of up to 1.5 kDa, and which contributes to cell death. It is however unclear if SLC25A5/ANT2 constitutes a pore-forming component of mPTP or regulates it. Acts as a regulator of mitophagy independently of ADP:ATP antiporter activity: promotes mitophagy via interaction with TIMM44, leading to inhibit the presequence translocase TIMM23, thereby promoting stabilization of PINK1. As part of the mitotic spindle-associated MMXD complex it may play a role in chromosome segregation. This Bos taurus (Bovine) protein is ADP/ATP translocase 2.